A 140-amino-acid chain; its full sequence is Transcription antitermination protein NusB (140 aa).

Belongs to the NusB family.

In terms of biological role, involved in transcription antitermination. Required for transcription of ribosomal RNA (rRNA) genes. Binds specifically to the boxA antiterminator sequence of the ribosomal RNA (rrn) operons. The polypeptide is Transcription antitermination protein NusB (Alteromonas mediterranea (strain DSM 17117 / CIP 110805 / LMG 28347 / Deep ecotype)).